The sequence spans 85 residues: MAKTKSGGSTSNGRDSKGRRLGQKLGDGQFALAGSIIYRQRGTKIHPGENVGIGKDHTLYTLIDGYIKYAIKRNRKYASAFEERK.

Residues 1-13 (MAKTKSGGSTSNG) are compositionally biased toward polar residues. A disordered region spans residues 1 to 26 (MAKTKSGGSTSNGRDSKGRRLGQKLG).

This sequence belongs to the bacterial ribosomal protein bL27 family.

The chain is Large ribosomal subunit protein bL27 from Mycoplasma mobile (strain ATCC 43663 / 163K / NCTC 11711) (Mesomycoplasma mobile).